Consider the following 128-residue polypeptide: Fluoride-specific ion channel FluC 1 (128 aa).

Helical transmembrane passes span 10 to 30 (VAFFAFWGGLARYGLTEAFSF), 32 to 52 (GTVIANLLGCFLLAFLTYFFL), 59 to 79 (AWLTTGLGTGFVGAFTTFSSF), and 93 to 113 (FGALLYFTGTIAAGFLFAWAG). 2 residues coordinate Na(+): glycine 71 and threonine 74.

Belongs to the fluoride channel Fluc/FEX (TC 1.A.43) family.

Its subcellular location is the cell membrane. The catalysed reaction is fluoride(in) = fluoride(out). With respect to regulation, na(+) is not transported, but it plays an essential structural role and its presence is essential for fluoride channel function. In terms of biological role, fluoride-specific ion channel. Important for reducing fluoride concentration in the cell, thus reducing its toxicity. In Lactobacillus delbrueckii subsp. bulgaricus (strain ATCC 11842 / DSM 20081 / BCRC 10696 / JCM 1002 / NBRC 13953 / NCIMB 11778 / NCTC 12712 / WDCM 00102 / Lb 14), this protein is Fluoride-specific ion channel FluC 1.